We begin with the raw amino-acid sequence, 78 residues long: Large ribosomal subunit protein bL28 (78 aa).

It belongs to the bacterial ribosomal protein bL28 family.

This chain is Large ribosomal subunit protein bL28, found in Synechococcus sp. (strain ATCC 27144 / PCC 6301 / SAUG 1402/1) (Anacystis nidulans).